We begin with the raw amino-acid sequence, 551 residues long: Alkaline nuclease (551 aa).

It belongs to the herpesviridae alkaline nuclease family. In terms of assembly, interacts with major DNA-binding protein; this interaction increases the nuclease processivity of the alkaline exonuclease.

It localises to the host nucleus. The protein resides in the host cytoplasm. In terms of biological role, plays a role in processing non linear or branched viral DNA intermediates in order to promote the production of mature packaged unit-length linear progeny viral DNA molecules. Exhibits endonuclease and exonuclease activities and accepts both double-stranded and single-stranded DNA as substrate. Exonuclease digestion of DNA is in the 5'-&gt; 3' direction and the products are 5'-monophosphate nucleosides. Additionally, forms a recombinase with the major DNA-binding protein, which displays strand exchange activity. The protein is Alkaline nuclease of Varicella-zoster virus (strain Oka vaccine) (HHV-3).